Reading from the N-terminus, the 139-residue chain is Aspartate 1-decarboxylase (139 aa).

The active-site Schiff-base intermediate with substrate; via pyruvic acid is the S25. S25 carries the post-translational modification Pyruvic acid (Ser). Residue T57 coordinates substrate. Y58 serves as the catalytic Proton donor. 73–75 (GAA) provides a ligand contact to substrate. The disordered stretch occupies residues 116 to 139 (ELGSDPAHAPEGSGLTSPRSLTFA). Residues 129–139 (GLTSPRSLTFA) show a composition bias toward polar residues.

The protein belongs to the PanD family. As to quaternary structure, heterooctamer of four alpha and four beta subunits. Pyruvate serves as cofactor. Is synthesized initially as an inactive proenzyme, which is activated by self-cleavage at a specific serine bond to produce a beta-subunit with a hydroxyl group at its C-terminus and an alpha-subunit with a pyruvoyl group at its N-terminus.

The protein localises to the cytoplasm. It carries out the reaction L-aspartate + H(+) = beta-alanine + CO2. It functions in the pathway cofactor biosynthesis; (R)-pantothenate biosynthesis; beta-alanine from L-aspartate: step 1/1. Its function is as follows. Catalyzes the pyruvoyl-dependent decarboxylation of aspartate to produce beta-alanine. In Nocardia farcinica (strain IFM 10152), this protein is Aspartate 1-decarboxylase.